A 425-amino-acid chain; its full sequence is UDP-N-acetylglucosamine 1-carboxyvinyltransferase (425 aa).

25 to 26 (KN) contributes to the phosphoenolpyruvate binding site. Arg95 serves as a coordination point for UDP-N-acetyl-alpha-D-glucosamine. Residue Cys119 is the Proton donor of the active site. Cys119 carries the post-translational modification 2-(S-cysteinyl)pyruvic acid O-phosphothioketal. Residues 124–128 (RPVDQ), Asp306, and Ile328 each bind UDP-N-acetyl-alpha-D-glucosamine.

It belongs to the EPSP synthase family. MurA subfamily.

Its subcellular location is the cytoplasm. It carries out the reaction phosphoenolpyruvate + UDP-N-acetyl-alpha-D-glucosamine = UDP-N-acetyl-3-O-(1-carboxyvinyl)-alpha-D-glucosamine + phosphate. The protein operates within cell wall biogenesis; peptidoglycan biosynthesis. In terms of biological role, cell wall formation. Adds enolpyruvyl to UDP-N-acetylglucosamine. The sequence is that of UDP-N-acetylglucosamine 1-carboxyvinyltransferase from Thermus thermophilus (strain ATCC BAA-163 / DSM 7039 / HB27).